We begin with the raw amino-acid sequence, 454 residues long: Kynurenine--oxoglutarate transaminase 3 (454 aa).

The residue at position 2 (F2) is an N-acetylserine. G71 serves as a coordination point for substrate. Residue K116 is modified to N6-acetyllysine; alternate. K116 is modified (N6-succinyllysine; alternate). Position 218 (N218) interacts with substrate. Position 280 is an N6-(pyridoxal phosphate)lysine (K280). R429 provides a ligand contact to substrate.

The protein belongs to the class-I pyridoxal-phosphate-dependent aminotransferase family. As to quaternary structure, homodimer. It depends on pyridoxal 5'-phosphate as a cofactor.

It carries out the reaction L-kynurenine + 2-oxoglutarate = kynurenate + L-glutamate + H2O. The enzyme catalyses L-kynurenine + glyoxylate = kynurenate + glycine + H2O. The catalysed reaction is 3-hydroxy-L-kynurenine + glyoxylate = xanthurenate + glycine + H2O. It catalyses the reaction an S-substituted L-cysteine + H2O = a thiol + pyruvate + NH4(+). The protein operates within amino-acid degradation; L-kynurenine degradation; kynurenate from L-kynurenine: step 1/2. Its function is as follows. Catalyzes the irreversible transamination of the L-tryptophan metabolite L-kynurenine to form kynurenic acid (KA), an intermediate in the tryptophan catabolic pathway which is also a broad spectrum antagonist of the three ionotropic excitatory amino acid receptors among others. May catalyze the beta-elimination of S-conjugates and Se-conjugates of L-(seleno)cysteine, resulting in the cleavage of the C-S or C-Se bond. Has transaminase activity towards L-kynurenine, tryptophan, phenylalanine, serine, cysteine, methionine, histidine, glutamine and asparagine with glyoxylate as an amino group acceptor (in vitro). Has lower activity with 2-oxoglutarate as amino group acceptor (in vitro). This chain is Kynurenine--oxoglutarate transaminase 3, found in Homo sapiens (Human).